The primary structure comprises 315 residues: DNA-directed RNA polymerase subunit alpha (315 aa).

Positions 1 to 228 are alpha N-terminal domain (alpha-NTD); the sequence is MAQFQIECVE…DLFNPLKDIS (228 aa). The segment at 243–315 is alpha C-terminal domain (alpha-CTD); the sequence is TAQIPIEELQ…LPQERSSKHN (73 aa).

The protein belongs to the RNA polymerase alpha chain family. As to quaternary structure, homodimer. In cyanobacteria the RNAP catalytic core is composed of 2 alpha, 1 beta, 1 beta', 1 gamma and 1 omega subunit. When a sigma factor is associated with the core the holoenzyme is formed, which can initiate transcription.

It carries out the reaction RNA(n) + a ribonucleoside 5'-triphosphate = RNA(n+1) + diphosphate. Its function is as follows. DNA-dependent RNA polymerase catalyzes the transcription of DNA into RNA using the four ribonucleoside triphosphates as substrates. The sequence is that of DNA-directed RNA polymerase subunit alpha from Nostoc sp. (strain PCC 7120 / SAG 25.82 / UTEX 2576).